The sequence spans 248 residues: Ubiquinone/menaquinone biosynthesis C-methyltransferase UbiE (248 aa).

S-adenosyl-L-methionine-binding residues include Ser68 and Asp92.

Belongs to the class I-like SAM-binding methyltransferase superfamily. MenG/UbiE family.

It carries out the reaction a 2-demethylmenaquinol + S-adenosyl-L-methionine = a menaquinol + S-adenosyl-L-homocysteine + H(+). The catalysed reaction is a 2-methoxy-6-(all-trans-polyprenyl)benzene-1,4-diol + S-adenosyl-L-methionine = a 5-methoxy-2-methyl-3-(all-trans-polyprenyl)benzene-1,4-diol + S-adenosyl-L-homocysteine + H(+). The protein operates within quinol/quinone metabolism; menaquinone biosynthesis; menaquinol from 1,4-dihydroxy-2-naphthoate: step 2/2. It functions in the pathway cofactor biosynthesis; ubiquinone biosynthesis. Methyltransferase required for the conversion of demethylmenaquinol (DMKH2) to menaquinol (MKH2) and the conversion of 2-polyprenyl-6-methoxy-1,4-benzoquinol (DDMQH2) to 2-polyprenyl-3-methyl-6-methoxy-1,4-benzoquinol (DMQH2). The sequence is that of Ubiquinone/menaquinone biosynthesis C-methyltransferase UbiE from Rickettsia africae (strain ESF-5).